Here is a 539-residue protein sequence, read N- to C-terminus: CTP synthase (539 aa).

Residues 1–267 form an amidoligase domain region; the sequence is MTKFIFVTGG…DDLVIKRLDL (267 aa). Ser-13 serves as a coordination point for CTP. Ser-13 provides a ligand contact to UTP. 14–19 is a binding site for ATP; that stretch reads SLGKGI. L-glutamine is bound at residue Tyr-54. Asp-71 lines the ATP pocket. The Mg(2+) site is built by Asp-71 and Glu-141. Residues 148–150, 188–193, and Lys-224 contribute to the CTP site; these read DIE and KTKPTQ. Residues 188–193 and Lys-224 contribute to the UTP site; that span reads KTKPTQ. Residue 240-242 coordinates ATP; the sequence is RDA. In terms of domain architecture, Glutamine amidotransferase type-1 spans 293-535; that stretch reads TIGLVGKYVS…IEAANKYKEA (243 aa). Position 355 (Gly-355) interacts with L-glutamine. Cys-382 acts as the Nucleophile; for glutamine hydrolysis in catalysis. L-glutamine-binding positions include 383-386, Glu-406, and Arg-463; that span reads LGMQ. Active-site residues include His-508 and Glu-510.

This sequence belongs to the CTP synthase family. As to quaternary structure, homotetramer.

The catalysed reaction is UTP + L-glutamine + ATP + H2O = CTP + L-glutamate + ADP + phosphate + 2 H(+). It catalyses the reaction L-glutamine + H2O = L-glutamate + NH4(+). The enzyme catalyses UTP + NH4(+) + ATP = CTP + ADP + phosphate + 2 H(+). The protein operates within pyrimidine metabolism; CTP biosynthesis via de novo pathway; CTP from UDP: step 2/2. Its activity is regulated as follows. Allosterically activated by GTP, when glutamine is the substrate; GTP has no effect on the reaction when ammonia is the substrate. The allosteric effector GTP functions by stabilizing the protein conformation that binds the tetrahedral intermediate(s) formed during glutamine hydrolysis. Inhibited by the product CTP, via allosteric rather than competitive inhibition. Functionally, catalyzes the ATP-dependent amination of UTP to CTP with either L-glutamine or ammonia as the source of nitrogen. Regulates intracellular CTP levels through interactions with the four ribonucleotide triphosphates. The chain is CTP synthase from Staphylococcus carnosus (strain TM300).